Here is an 89-residue protein sequence, read N- to C-terminus: Small ribosomal subunit protein uS14 (89 aa).

Belongs to the universal ribosomal protein uS14 family. As to quaternary structure, part of the 30S ribosomal subunit. Contacts proteins S3 and S10.

Binds 16S rRNA, required for the assembly of 30S particles and may also be responsible for determining the conformation of the 16S rRNA at the A site. This is Small ribosomal subunit protein uS14 from Parabacteroides distasonis (strain ATCC 8503 / DSM 20701 / CIP 104284 / JCM 5825 / NCTC 11152).